Reading from the N-terminus, the 326-residue chain is Chain length determinant protein (326 aa).

Topologically, residues methionine 1 to lysine 31 are cytoplasmic. Residues methionine 32–alanine 52 form a helical membrane-spanning segment. Topologically, residues lysine 53–lysine 295 are periplasmic. The chain crosses the membrane as a helical span at residues alanine 296 to glycine 316. Residues arginine 317–lysine 326 lie on the Cytoplasmic side of the membrane.

This sequence belongs to the WzzB/Cld/Rol family. Homodimer.

The protein resides in the cell inner membrane. It functions in the pathway bacterial outer membrane biogenesis; lipopolysaccharide biosynthesis. Its function is as follows. Confers a modal distribution of chain length on the O-antigen component of lipopolysaccharide (LPS). Gives rise to a reduced number of short chain molecules and increases in numbers of longer molecules. The sequence is that of Chain length determinant protein (wzzB) from Escherichia coli (strain K12).